The sequence spans 296 residues: Fructose-bisphosphate aldolase class 1 (296 aa).

The active-site Proton acceptor is the E175. K212 serves as the catalytic Schiff-base intermediate with dihydroxyacetone-P.

This sequence belongs to the class I fructose-bisphosphate aldolase family.

It catalyses the reaction beta-D-fructose 1,6-bisphosphate = D-glyceraldehyde 3-phosphate + dihydroxyacetone phosphate. It participates in carbohydrate degradation; glycolysis; D-glyceraldehyde 3-phosphate and glycerone phosphate from D-glucose: step 4/4. In Staphylococcus aureus (strain MRSA252), this protein is Fructose-bisphosphate aldolase class 1.